Reading from the N-terminus, the 77-residue chain is Large ribosomal subunit protein uL24c (77 aa).

The protein belongs to the universal ribosomal protein uL24 family. In terms of assembly, part of the 50S ribosomal subunit.

The protein localises to the plastid. The protein resides in the chloroplast. Its function is as follows. One of two assembly initiator proteins, it binds directly to the 5'-end of the 23S rRNA, where it nucleates assembly of the 50S subunit. In Thalassiosira pseudonana (Marine diatom), this protein is Large ribosomal subunit protein uL24c (rpl24).